The primary structure comprises 468 residues: Uronate isomerase (468 aa).

This sequence belongs to the metallo-dependent hydrolases superfamily. Uronate isomerase family.

It catalyses the reaction D-glucuronate = D-fructuronate. The enzyme catalyses aldehydo-D-galacturonate = keto-D-tagaturonate. The protein operates within carbohydrate metabolism; pentose and glucuronate interconversion. The chain is Uronate isomerase from Lachnospira eligens (strain ATCC 27750 / DSM 3376 / VPI C15-48 / C15-B4) (Eubacterium eligens).